A 209-amino-acid chain; its full sequence is Ribosome maturation factor RimM (209 aa).

Residues 103–178 (EGATYVSDLV…RIEMVLPQGM (76 aa)) enclose the PRC barrel domain. The tract at residues 184-209 (PLSKAEKERQKSEADETREAGERRKR) is disordered. Over residues 187–209 (KAEKERQKSEADETREAGERRKR) the composition is skewed to basic and acidic residues.

Belongs to the RimM family. As to quaternary structure, binds ribosomal protein uS19.

It is found in the cytoplasm. An accessory protein needed during the final step in the assembly of 30S ribosomal subunit, possibly for assembly of the head region. Essential for efficient processing of 16S rRNA. May be needed both before and after RbfA during the maturation of 16S rRNA. It has affinity for free ribosomal 30S subunits but not for 70S ribosomes. In Koribacter versatilis (strain Ellin345), this protein is Ribosome maturation factor RimM.